Here is a 436-residue protein sequence, read N- to C-terminus: GTPase Der (436 aa).

EngA-type G domains follow at residues P4–V167 and I175–N351. GTP contacts are provided by residues G10–S17, D57–I61, N119–D122, G181–S188, D229–M233, and N294–D297. The KH-like domain occupies R352–K436.

This sequence belongs to the TRAFAC class TrmE-Era-EngA-EngB-Septin-like GTPase superfamily. EngA (Der) GTPase family. Associates with the 50S ribosomal subunit.

Functionally, GTPase that plays an essential role in the late steps of ribosome biogenesis. The sequence is that of GTPase Der from Streptococcus thermophilus (strain ATCC BAA-491 / LMD-9).